The sequence spans 196 residues: Gastrula zinc finger protein XlCGF64.1 (196 aa).

7 consecutive C2H2-type zinc fingers follow at residues 6–28 (YECP…QRGH), 34–56 (FMCT…QFIH), 62–84 (YVCT…QRGH), 90–112 (FTCT…QFIH), 118–140 (YECT…QRGH), 146–168 (FMCT…QFIH), and 174–196 (LMCT…KLSH).

The protein belongs to the krueppel C2H2-type zinc-finger protein family.

Its subcellular location is the nucleus. Functionally, may be involved in transcriptional regulation. This is Gastrula zinc finger protein XlCGF64.1 from Xenopus laevis (African clawed frog).